A 200-amino-acid chain; its full sequence is Adenylate kinase (200 aa).

10–15 is an ATP binding site; sequence GAGKGT. The segment at 30 to 59 is NMP; it reads STGDLFRANISQQTELGKLAKSYMDAGNLV. AMP contacts are provided by residues T31, R36, 57 to 59, 84 to 87, and Q91; these read NLV and GFPR. The LID stretch occupies residues 125–163; sequence GRRVCRNDSAHVFHVTYTPPKKEGVCDVCGGELYQRDDD. Residues R126 and 136 to 137 contribute to the ATP site; that span reads VF. AMP contacts are provided by R160 and R171.

It belongs to the adenylate kinase family. Monomer.

The protein localises to the cytoplasm. The enzyme catalyses AMP + ATP = 2 ADP. It participates in purine metabolism; AMP biosynthesis via salvage pathway; AMP from ADP: step 1/1. In terms of biological role, catalyzes the reversible transfer of the terminal phosphate group between ATP and AMP. Plays an important role in cellular energy homeostasis and in adenine nucleotide metabolism. This Streptomyces lividans protein is Adenylate kinase.